The following is a 168-amino-acid chain: Peptide deformylase 1 (168 aa).

Residues Cys-91 and His-133 each contribute to the Fe cation site. Glu-134 is a catalytic residue. His-137 is a binding site for Fe cation.

It belongs to the polypeptide deformylase family. Fe(2+) is required as a cofactor.

The enzyme catalyses N-terminal N-formyl-L-methionyl-[peptide] + H2O = N-terminal L-methionyl-[peptide] + formate. Its function is as follows. Removes the formyl group from the N-terminal Met of newly synthesized proteins. Requires at least a dipeptide for an efficient rate of reaction. N-terminal L-methionine is a prerequisite for activity but the enzyme has broad specificity at other positions. The polypeptide is Peptide deformylase 1 (Shewanella oneidensis (strain ATCC 700550 / JCM 31522 / CIP 106686 / LMG 19005 / NCIMB 14063 / MR-1)).